A 450-amino-acid polypeptide reads, in one-letter code: Probable ECA polymerase (450 aa).

The next 11 membrane-spanning stretches (helical) occupy residues 6–26 (FSGLFVVWLLCTLFIATLTWF), 37–57 (VFFSLLFLLTFFFGFPLTSVL), 63–83 (VGVAPPEILLQALLSAGCFYA), 118–138 (VILMGIALVSVGIFFMHNGFL), 155–175 (GVALKRFFYFFIPAMLVVYFL), 181–201 (AWLFFLVSTVAFGLLTYMIVG), 207–227 (IIIAFAIFLFIGIIRGWISLW), 228–248 (MLAAAGVLGIVGMFWLALKRY), 341–361 (LVVMGGALFIPLGAIVVGLII), 378–398 (YKAAILHSFCFGAIFNMIVLA), and 410–430 (VFFIVVFGACLMIAKLLYWLF).

Belongs to the WzyE family. In terms of assembly, probably part of a complex composed of WzxE, WzyE and WzzE.

Its subcellular location is the cell inner membrane. It participates in bacterial outer membrane biogenesis; enterobacterial common antigen biosynthesis. Its function is as follows. Probably involved in the polymerization of enterobacterial common antigen (ECA) trisaccharide repeat units. The chain is Probable ECA polymerase from Escherichia coli O7:K1 (strain IAI39 / ExPEC).